The primary structure comprises 92 residues: MPRSLKKGPFIDLHLLKKVEKAVESGDKKPLKTWSRRSMIIPSMIGLTIAVHNGRQHVPVFVTEEMIGHKLGEFAPTRTYRGHAADKKAKKR.

It belongs to the universal ribosomal protein uS19 family.

In terms of biological role, protein S19 forms a complex with S13 that binds strongly to the 16S ribosomal RNA. The sequence is that of Small ribosomal subunit protein uS19 from Vibrio campbellii (strain ATCC BAA-1116).